The sequence spans 345 residues: Probable translocation protein y4yO (345 aa).

A compositionally biased stretch (basic and acidic residues) spans 1-22 (MSDTSEEKSHGATPKKLSDARK). Residues 1-25 (MSDTSEEKSHGATPKKLSDARKRGQ) are disordered. 3 helical membrane passes run 87-107 (LATVGPLLSALFGAVILAALL), 151-171 (VLVLGGTFSLFFLGLWKTMVY), and 189-209 (QLIGIGAGALLIGGLIDLLLQ).

Belongs to the type III secretion exporter family.

The protein resides in the cell membrane. Its function is as follows. Could be involved in the secretion of an unknown factor. The polypeptide is Probable translocation protein y4yO (Sinorhizobium fredii (strain NBRC 101917 / NGR234)).